The sequence spans 1501 residues: RE1-silencing transcription factor A (1501 aa).

A C2H2-type 1 zinc finger spans residues 158–180; it reads FRCKPCQYKAESEEEFVHHIKIH. Basic and acidic residues predominate over residues 186–200; that stretch reads VDNDSKKNPQGKEAD. The disordered stretch occupies residues 186–209; it reads VDNDSKKNPQGKEADSSIPEESDI. 7 consecutive C2H2-type zinc fingers follow at residues 214–236, 246–268, 274–296, 302–324, 330–353, 359–381, and 387–410; these read IQCDGCGYNTNRFDHYLAHLKHH, YKCTICTYSTVSEYHWKKHLRNH, YTCSQCSYFSDRKNNYIQHIRTH, YQCIICLYSSSQKTHLTRHMRTH, FKCEQCSYVASNQHEVTRHARQVH, LTCPHCDYKTADRSNFKKHVELH, and FLCPVCDYAASKKCNLQYHIKSRH. Disordered regions lie at residues 491-514, 569-612, 885-929, and 1040-1079; these read SSTQKKIKASEVRPEKIVDKSRKS, SFVK…SVAS, PTKV…VPGD, and VAAGDEPTSVQPLSREDPKSVQPIGEDQPTSVQPPGGDEQ. Composition is skewed to basic and acidic residues over residues 498–512 and 594–605; these read KASEVRPEKIVDKSR and ITEKKEKGKQLD. The segment covering 1067–1079 has biased composition (polar residues); sequence QPTSVQPPGGDEQ. The C2H2-type 9 zinc finger occupies 1463-1485; it reads FVCIFCDRTFRKEEEYTKHLRRH.

It localises to the nucleus. It is found in the cytoplasm. Transcriptional repressor which binds neuron-restrictive silencer element (NRSE) and represses neuronal gene transcription in non-neuronal cells. Plays a role in the early development of the nervous system and is required for proper patterning of the neuroectoderm during gastrulation. This involves the correct speciation of the neuroepithelial domain and adequate development of the non-neural ectoderm. The polypeptide is RE1-silencing transcription factor A (rest-a) (Xenopus laevis (African clawed frog)).